A 148-amino-acid polypeptide reads, in one-letter code: Putative FAD-linked sulfhydryl oxidase 096R (148 aa).

The region spanning 1–103 (MSIDPKLWGN…LAAKTVFQRY (103 aa)) is the ERV/ALR sulfhydryl oxidase domain. C48 and C51 are oxidised to a cystine. The chain crosses the membrane as a helical span at residues 122-142 (WSPWLTTALAVILVVVVAGIG).

It belongs to the IIV-6 347L family. FAD serves as cofactor.

It is found in the membrane. The catalysed reaction is 2 R'C(R)SH + O2 = R'C(R)S-S(R)CR' + H2O2. Functionally, FAD-dependent sulfhydryl oxidase that catalyzes disulfide bond formation. In Aedes vexans (Inland floodwater mosquito), this protein is Putative FAD-linked sulfhydryl oxidase 096R.